The chain runs to 578 residues: Isocitrate dehydrogenase kinase/phosphatase (578 aa).

ATP-binding positions include 315–321 (APGIRGM) and Lys336. Asp371 is an active-site residue.

The protein belongs to the AceK family.

It is found in the cytoplasm. It carries out the reaction L-seryl-[isocitrate dehydrogenase] + ATP = O-phospho-L-seryl-[isocitrate dehydrogenase] + ADP + H(+). Its function is as follows. Bifunctional enzyme which can phosphorylate or dephosphorylate isocitrate dehydrogenase (IDH) on a specific serine residue. This is a regulatory mechanism which enables bacteria to bypass the Krebs cycle via the glyoxylate shunt in response to the source of carbon. When bacteria are grown on glucose, IDH is fully active and unphosphorylated, but when grown on acetate or ethanol, the activity of IDH declines drastically concomitant with its phosphorylation. This chain is Isocitrate dehydrogenase kinase/phosphatase, found in Escherichia coli (strain K12 / MC4100 / BW2952).